A 137-amino-acid chain; its full sequence is Phosphoribosyl-AMP cyclohydrolase (137 aa).

Residue Asp84 coordinates Mg(2+). A Zn(2+)-binding site is contributed by Cys85. Mg(2+)-binding residues include Asp86 and Asp88. Residues Cys101 and Cys108 each contribute to the Zn(2+) site.

Belongs to the PRA-CH family. Homodimer. Mg(2+) is required as a cofactor. Requires Zn(2+) as cofactor.

The protein resides in the cytoplasm. It catalyses the reaction 1-(5-phospho-beta-D-ribosyl)-5'-AMP + H2O = 1-(5-phospho-beta-D-ribosyl)-5-[(5-phospho-beta-D-ribosylamino)methylideneamino]imidazole-4-carboxamide. The protein operates within amino-acid biosynthesis; L-histidine biosynthesis; L-histidine from 5-phospho-alpha-D-ribose 1-diphosphate: step 3/9. Functionally, catalyzes the hydrolysis of the adenine ring of phosphoribosyl-AMP. The protein is Phosphoribosyl-AMP cyclohydrolase of Chlorobium phaeobacteroides (strain DSM 266 / SMG 266 / 2430).